The chain runs to 448 residues: Phosphoglucosamine mutase (448 aa).

Serine 100 functions as the Phosphoserine intermediate in the catalytic mechanism. Mg(2+)-binding residues include serine 100, aspartate 240, aspartate 242, and aspartate 244. Serine 100 is subject to Phosphoserine.

It belongs to the phosphohexose mutase family. It depends on Mg(2+) as a cofactor. In terms of processing, activated by phosphorylation.

It carries out the reaction alpha-D-glucosamine 1-phosphate = D-glucosamine 6-phosphate. In terms of biological role, catalyzes the conversion of glucosamine-6-phosphate to glucosamine-1-phosphate. The protein is Phosphoglucosamine mutase of Clostridium acetobutylicum (strain ATCC 824 / DSM 792 / JCM 1419 / IAM 19013 / LMG 5710 / NBRC 13948 / NRRL B-527 / VKM B-1787 / 2291 / W).